We begin with the raw amino-acid sequence, 160 residues long: Phosphopantetheine adenylyltransferase (160 aa).

S10 lines the substrate pocket. ATP is bound by residues 10-11 and H18; that span reads SF. Substrate-binding residues include K42, T74, and R88. ATP-binding positions include 89-91, E99, and 124-130; these read GLR and YSFVSST.

The protein belongs to the bacterial CoaD family. As to quaternary structure, homohexamer. Mg(2+) is required as a cofactor.

The protein localises to the cytoplasm. It catalyses the reaction (R)-4'-phosphopantetheine + ATP + H(+) = 3'-dephospho-CoA + diphosphate. It participates in cofactor biosynthesis; coenzyme A biosynthesis; CoA from (R)-pantothenate: step 4/5. Functionally, reversibly transfers an adenylyl group from ATP to 4'-phosphopantetheine, yielding dephospho-CoA (dPCoA) and pyrophosphate. The chain is Phosphopantetheine adenylyltransferase from Leptospira biflexa serovar Patoc (strain Patoc 1 / Ames).